Consider the following 248-residue polypeptide: 5'-nucleotidase SurE (248 aa).

Residues D8, D9, S39, and N91 each contribute to the a divalent metal cation site.

The protein belongs to the SurE nucleotidase family. Requires a divalent metal cation as cofactor.

It localises to the cytoplasm. The enzyme catalyses a ribonucleoside 5'-phosphate + H2O = a ribonucleoside + phosphate. In terms of biological role, nucleotidase that shows phosphatase activity on nucleoside 5'-monophosphates. The polypeptide is 5'-nucleotidase SurE (Neisseria meningitidis serogroup C (strain 053442)).